The chain runs to 89 residues: uncharacterized protein (89 aa).

The disordered stretch occupies residues Thr31–Val89. The segment covering Glu36–Arg58 has biased composition (basic and acidic residues). Positions Asn59–Val69 are enriched in pro residues.

This is an uncharacterized protein from Dictyostelium discoideum (Social amoeba).